Here is a 65-residue protein sequence, read N- to C-terminus: Large ribosomal subunit protein eL24 (65 aa).

4 residues coordinate Zn(2+): C6, C9, C32, and C36. The C4-type zinc-finger motif lies at 6–36 (CAFCGADIPPGYGIMYVKSDGTVLRYCSRKC).

Belongs to the eukaryotic ribosomal protein eL24 family. Part of the 50S ribosomal subunit. Forms a cluster with proteins L3 and L14. Zn(2+) is required as a cofactor.

Its function is as follows. Binds to the 23S rRNA. The chain is Large ribosomal subunit protein eL24 from Pyrobaculum arsenaticum (strain DSM 13514 / JCM 11321 / PZ6).